A 452-amino-acid polypeptide reads, in one-letter code: Probable phosphoglucosamine mutase (452 aa).

The Phosphoserine intermediate role is filled by S96. Residues S96, D233, D235, and D237 each contribute to the Mg(2+) site. The residue at position 96 (S96) is a Phosphoserine.

The protein belongs to the phosphohexose mutase family. Requires Mg(2+) as cofactor. Activated by phosphorylation.

It carries out the reaction alpha-D-glucosamine 1-phosphate = D-glucosamine 6-phosphate. Functionally, catalyzes the conversion of glucosamine-6-phosphate to glucosamine-1-phosphate. This Pyrococcus furiosus (strain ATCC 43587 / DSM 3638 / JCM 8422 / Vc1) protein is Probable phosphoglucosamine mutase.